The sequence spans 615 residues: TORTIFOLIA1-like protein 3 (615 aa).

5 HEAT repeats span residues G44–L81, P86–K123, P125–D163, R168–L205, and G213–N250. The tract at residues V288–S446 is disordered. Residues R318–K347 are compositionally biased toward polar residues. Residues D391–H406 are compositionally biased toward basic and acidic residues. The segment covering S407–I426 has biased composition (polar residues). Phosphoserine is present on S456.

This chain is TORTIFOLIA1-like protein 3, found in Arabidopsis thaliana (Mouse-ear cress).